The following is a 646-amino-acid chain: 1-deoxy-D-xylulose-5-phosphate synthase (646 aa).

Residues His86 and 127–129 (AHS) each bind thiamine diphosphate. Residue Asp158 participates in Mg(2+) binding. Thiamine diphosphate contacts are provided by residues 159–160 (GA), Asn188, Tyr295, and Glu377. Residue Asn188 coordinates Mg(2+).

This sequence belongs to the transketolase family. DXPS subfamily. As to quaternary structure, homodimer. Requires Mg(2+) as cofactor. The cofactor is thiamine diphosphate.

The catalysed reaction is D-glyceraldehyde 3-phosphate + pyruvate + H(+) = 1-deoxy-D-xylulose 5-phosphate + CO2. It functions in the pathway metabolic intermediate biosynthesis; 1-deoxy-D-xylulose 5-phosphate biosynthesis; 1-deoxy-D-xylulose 5-phosphate from D-glyceraldehyde 3-phosphate and pyruvate: step 1/1. Functionally, catalyzes the acyloin condensation reaction between C atoms 2 and 3 of pyruvate and glyceraldehyde 3-phosphate to yield 1-deoxy-D-xylulose-5-phosphate (DXP). This chain is 1-deoxy-D-xylulose-5-phosphate synthase, found in Burkholderia ambifaria (strain ATCC BAA-244 / DSM 16087 / CCUG 44356 / LMG 19182 / AMMD) (Burkholderia cepacia (strain AMMD)).